Reading from the N-terminus, the 279-residue chain is ATP synthase gamma chain (279 aa).

Belongs to the ATPase gamma chain family. In terms of assembly, F-type ATPases have 2 components, CF(1) - the catalytic core - and CF(0) - the membrane proton channel. CF(1) has five subunits: alpha(3), beta(3), gamma(1), delta(1), epsilon(1). CF(0) has three main subunits: a, b and c.

It is found in the cell membrane. In terms of biological role, produces ATP from ADP in the presence of a proton gradient across the membrane. The gamma chain is believed to be important in regulating ATPase activity and the flow of protons through the CF(0) complex. In Mycoplasmopsis pulmonis (strain UAB CTIP) (Mycoplasma pulmonis), this protein is ATP synthase gamma chain.